Reading from the N-terminus, the 293-residue chain is MPWIQLKITTTGQQADTLSDALTESGAVSVTFQDTHDVPVYEPLPGETRLWGDTDVIGLYDAATDIATVLDVLKTHPLLGADFTYKIEQLEDKDWEREWMDNFHPMRFGERLWICPSWRPVPDPQAVNVMLDPGLAFGTGTHPTTALCLQWLDGLDLRGKTVIDFGCGSGILAIAALKLGAAHAVGIDIDPQAILASRDNAQRNGVAELLTLYLPQQQPQDLHANVVVANILAGPLRELAPLIIDLPLPGGYLGLSGILASQAESVAQAYAAAFSLDPVAEKEEWCRITGTRR.

4 residues coordinate S-adenosyl-L-methionine: Thr145, Gly166, Asp188, and Asn230.

This sequence belongs to the methyltransferase superfamily. PrmA family.

It localises to the cytoplasm. It catalyses the reaction L-lysyl-[protein] + 3 S-adenosyl-L-methionine = N(6),N(6),N(6)-trimethyl-L-lysyl-[protein] + 3 S-adenosyl-L-homocysteine + 3 H(+). Its function is as follows. Methylates ribosomal protein L11. The protein is Ribosomal protein L11 methyltransferase of Sodalis glossinidius (strain morsitans).